The following is a 2601-amino-acid chain: Centrosomal protein of 295 kDa (2601 aa).

The tract at residues 1–560 (MKRKVVNTHK…KKTQPTGVGI (560 aa)) is necessary for centriole targeting and microtubule association. Phosphoserine is present on Ser-14. Coiled coils occupy residues 207 to 273 (KRPD…EDLA) and 500 to 552 (AARI…KRKK). Residues Ser-654 and Ser-938 each carry the phosphoserine modification. Residues 1008 to 1029 (PSADTKSGKIQEQHSSKSEKGL) form a disordered region. A compositionally biased stretch (basic and acidic residues) spans 1013–1027 (KSGKIQEQHSSKSEK). Coiled coils occupy residues 1053–1082 (LHDS…VELL) and 1498–1544 (IQSH…VSSE). A disordered region spans residues 1558–1580 (ADSERTQKSFPTKSNDTLPSSHR). Polar residues predominate over residues 1565-1577 (KSFPTKSNDTLPS). Ser-1637 carries the phosphoserine modification. Positions 1728-1758 (QEKLLVQRQTALQQQIQKHEETLKDFFKDSQ) form a coiled coil. Basic and acidic residues-rich tracts occupy residues 1795–1827 (RHAD…DLGR), 1985–2003 (FSEH…KEEE), and 2100–2112 (DNRD…DSSS). Disordered regions lie at residues 1795-1834 (RHAD…KPPV), 1979-2004 (LTDP…EEET), and 2085-2117 (HPDF…SHCA). Phosphothreonine is present on Thr-2473. The tract at residues 2478 to 2601 (SLQEAFIKRK…LEKLRAKNTC (124 aa)) is ALMS motif. The stretch at 2556 to 2581 (RLYNQLAEVKQQKEEKTKQEAYAQNR) forms a coiled coil.

In terms of assembly, interacts (via ALMS motif) with microtubules; this interaction is direct.

The protein resides in the cytoplasm. Its subcellular location is the cytoskeleton. The protein localises to the microtubule organizing center. It is found in the centrosome. It localises to the centriole. The protein resides in the spindle. Centriole-enriched microtubule-binding protein involved in centriole biogenesis. Essential for the generation of the distal portion of new-born centrioles in a CPAP- and CEP120-mediated elongation dependent manner during the cell cycle S/G2 phase after formation of the initiating cartwheel structure. Required for the recruitment of centriolar proteins, such as POC1B, POC5 and CEP135, into the distal portion of centrioles. Also required for centriole-to-centrosome conversion during mitotic progression, but is dispensable for cartwheel removal or centriole disengagement. Binds to and stabilizes centriolar microtubule. May be involved in ciliogenesis. This is Centrosomal protein of 295 kDa from Homo sapiens (Human).